The sequence spans 363 residues: Flagellar P-ring protein 2 (363 aa).

A signal peptide spans 1-20 (MKRIVLLLMSVALFSTAAQA).

This sequence belongs to the FlgI family. The basal body constitutes a major portion of the flagellar organelle and consists of four rings (L,P,S, and M) mounted on a central rod.

The protein resides in the periplasm. Its subcellular location is the bacterial flagellum basal body. In terms of biological role, assembles around the rod to form the L-ring and probably protects the motor/basal body from shearing forces during rotation. The sequence is that of Flagellar P-ring protein 2 (flgI2) from Vibrio parahaemolyticus serotype O3:K6 (strain RIMD 2210633).